The following is a 203-amino-acid chain: Holliday junction branch migration complex subunit RuvA (203 aa).

Residues 1–63 (MIGKLSGKID…EEHIHLYGFL (63 aa)) are domain I. Positions 64-142 (TLEEKNFFNL…KISSGSVIIK (79 aa)) are domain II. The tract at residues 143 to 149 (DSLNIKN) is flexible linker. Residues 150–203 (ITPVASNEVIKALVNLGFSRFEAQNAVQGIIIQNPEISIDELIKTALKNRNAGL) form a domain III region.

This sequence belongs to the RuvA family. In terms of assembly, homotetramer. Forms an RuvA(8)-RuvB(12)-Holliday junction (HJ) complex. HJ DNA is sandwiched between 2 RuvA tetramers; dsDNA enters through RuvA and exits via RuvB. An RuvB hexamer assembles on each DNA strand where it exits the tetramer. Each RuvB hexamer is contacted by two RuvA subunits (via domain III) on 2 adjacent RuvB subunits; this complex drives branch migration. In the full resolvosome a probable DNA-RuvA(4)-RuvB(12)-RuvC(2) complex forms which resolves the HJ.

It localises to the cytoplasm. The RuvA-RuvB-RuvC complex processes Holliday junction (HJ) DNA during genetic recombination and DNA repair, while the RuvA-RuvB complex plays an important role in the rescue of blocked DNA replication forks via replication fork reversal (RFR). RuvA specifically binds to HJ cruciform DNA, conferring on it an open structure. The RuvB hexamer acts as an ATP-dependent pump, pulling dsDNA into and through the RuvAB complex. HJ branch migration allows RuvC to scan DNA until it finds its consensus sequence, where it cleaves and resolves the cruciform DNA. The protein is Holliday junction branch migration complex subunit RuvA of Rickettsia felis (strain ATCC VR-1525 / URRWXCal2) (Rickettsia azadi).